Reading from the N-terminus, the 141-residue chain is Putative ankyrin repeat protein FPV223 (141 aa).

ANK repeat units follow at residues 21–50 (SGRT…DVFK), 54–83 (CMCT…YIVK), 85–114 (RNKL…NENS), and 118–140 (DGLT…MFVI).

The polypeptide is Putative ankyrin repeat protein FPV223 (Vertebrata (FPV)).